A 4144-amino-acid polypeptide reads, in one-letter code: DNA-dependent protein kinase catalytic subunit (4144 aa).

Lysine 127 is subject to N6-acetyllysine. The HEAT 1 repeat unit spans residues 298–333 (DNYVSLFEVLSKWCSHTNVEMKKAAHSALESFLKQV). Residues serine 521, serine 851, and serine 903 each carry the phosphoserine modification. One copy of the HEAT 2 repeat lies at 1014–1050 (QDTVALLETILDGIVDPVDSTLRDFCGRCIREFLKWS). Serine 1075 is modified (phosphoserine). At lysine 1219 the chain carries N6-acetyllysine. The segment at 1516–1551 (LDPSCKRLASGLLELAFAFGGLCEHLVDLLLDTAVL) is interaction with C1D. Positions 1516 to 1551 (LDPSCKRLASGLLELAFAFGGLCEHLVDLLLDTAVL) are leucine-zipper. Residues 1736–1769 (PMKSEEFPVGTLRYSNYVDCMKKFLDALELSQSP) form a TPR 1 repeat. Residue lysine 1983 is modified to N6-acetyllysine. Serine 2069 bears the Phosphoserine; by autocatalysis mark. Residue lysine 2271 is modified to N6-acetyllysine. The segment at 2448–3228 (LDIIYKMMAK…DHSLSMDEER (781 aa)) is KIP-binding. Threonine 2547 is subject to Phosphothreonine. Position 2621 is a phosphothreonine; by autocatalysis (threonine 2621). Serine 2624 carries the phosphoserine; by autocatalysis modification. Threonine 2650 and threonine 2659 each carry phosphothreonine; by autocatalysis. Positions 2697 to 2729 (AQKRNEKSQRAPLKSVGPDFGEKKLGLPGDKVD) are disordered. Residues 2716–2729 (FGEKKLGLPGDKVD) are compositionally biased toward basic and acidic residues. A may split the end of the DNA molecule, with the two strands separating around the region region spans residues 2753–2781 (EKLSLIYARKGIAEQKREKEIKSELKMKH). A Phosphoserine modification is found at serine 2805. 3 TPR repeats span residues 2903-2935 (PVGVRLLEEALLHLGPQEPPAKQFKGRMRVSPD), 2936-2964 (VVRWMELAKLYRSIGEYDILRGIFSSEIG), and 2965-2998 (TKQITQSAIFAEARSDYSEAAKQYNEALNKEEWV). The FAT domain occupies 2922–3555 (PAKQFKGRMR…VYPFIISSES (634 aa)). Serine 3221 bears the Phosphoserine mark. 4 positions are modified to N6-acetyllysine: lysine 3257, lysine 3276, lysine 3654, and lysine 3658. The stretch at 3711 to 3748 (LRNELEIPGQYDGKGKPLPEYHARIAGFDERIKVMASI) is one TPR 5 repeat. Positions 3738–4069 (FDERIKVMAS…IHYAKRKLAG (332 aa)) constitute a PI3K/PI4K catalytic domain. The tract at residues 3744 to 3750 (VMASIRK) is G-loop. Phosphoserine occurs at positions 3747 and 3837. The interval 3935–3943 (GIGDRHLNN) is catalytic loop. The interval 3955-3980 (GIDFGHAFGSATQFLPVPELMPFRLT) is activation loop. A Phosphoserine modification is found at serine 4042. An FATC domain is found at 4112 to 4144 (NGLSEEAQVKCLIDQATDPNILGRTWIGWEPWM).

Belongs to the PI3/PI4-kinase family. DNA-PK is a heterotrimer of PRKDC and the Ku dimer (composed of XRCC6/Ku70 and XRCC5/Ku86). Formation of this complex may be promoted by interaction with ILF3. Component of the core long-range non-homologous end joining (NHEJ) complex (also named DNA-PK complex) composed of PRKDC, LIG4, XRCC4, XRCC6/Ku70, XRCC5/Ku86 and NHEJ1/XLF. Additional component of the NHEJ complex includes PAXX. Following autophosphorylation, PRKDC dissociates from DNA. Interacts with DNA-PKcs-interacting protein (KIP) with the region upstream the kinase domain. PRKDC alone also interacts with and phosphorylates DCLRE1C, thereby activating the latent endonuclease activity of this protein. Interacts with C1D. Interacts with TTI1 and TELO2. Interacts with CIB1. Interacts with SETX. Interacts with NR4A3; the DNA-dependent protein kinase complex DNA-PK phosphorylates and activates NR4A3 and prevents NR4A3 ubiquitination and degradation. Interacts with BRAT1. Part of the HDP-RNP complex composed of at least HEXIM1, PRKDC, XRCC5, XRCC6, paraspeckle proteins (SFPQ, NONO, PSPC1, RBM14, and MATR3) and NEAT1 RNA. Interacts with KAT5. Autophosphorylated at two clusters, the T2609 cluster and the S2056 cluster. Autophosphorylated on Ser-2069, Thr-2621, Thr-2650 and Thr-2659. Ser-2069 and Thr-2621 are DNA damage-inducible phosphorylation sites (inducible with ionizing radiation, IR) dephosphorylated by PPP5C. Autophosphorylation induces a conformational change that leads to remodeling of the DNA-PK complex, requisite for efficient end processing and DNA repair. Autophosphorylation in trans within DNA-PK complexes loaded on DNA ends leads to the dissociation of PRKDC from DNA and the transition into the short-range NHEJ complex. Autophosphorylation of the T2609 cluster is required for hematopoietic development and protein synthesis in erythrocytes precursors. In terms of processing, S-nitrosylated by GAPDH. Post-translationally, polyubiquitinated by RNF144A, leading to proteasomal degradation.

It is found in the nucleus. Its subcellular location is the nucleolus. The protein localises to the cytoplasm. It localises to the cytosol. It carries out the reaction L-seryl-[protein] + ATP = O-phospho-L-seryl-[protein] + ADP + H(+). The catalysed reaction is L-threonyl-[protein] + ATP = O-phospho-L-threonyl-[protein] + ADP + H(+). Its activity is regulated as follows. Activity seems to be attenuated by autophosphorylation. Binding to the SL1 region of U3 small nucleolar RNA promotes auto-phosphorylation activity. Inhibited by wortmannin. Serine/threonine-protein kinase that acts as a molecular sensor for DNA damage. Involved in DNA non-homologous end joining (NHEJ) required for double-strand break (DSB) repair and V(D)J recombination. Must be bound to DNA to express its catalytic properties. Promotes processing of hairpin DNA structures in V(D)J recombination by activation of the hairpin endonuclease artemis (DCLRE1C). Recruited by XRCC5 and XRCC6 to DNA ends and is required to (1) protect and align broken ends of DNA, thereby preventing their degradation, (2) and sequester the DSB for repair by NHEJ. Acts as a scaffold protein to aid the localization of DNA repair proteins to the site of damage. The assembly of the DNA-PK complex at DNA ends is also required for the NHEJ ligation step. Found at the ends of chromosomes, suggesting a further role in the maintenance of telomeric stability and the prevention of chromosomal end fusion. Also involved in modulation of transcription. As part of the DNA-PK complex, involved in the early steps of ribosome assembly by promoting the processing of precursor rRNA into mature 18S rRNA in the small-subunit processome. Binding to U3 small nucleolar RNA, recruits PRKDC and XRCC5/Ku86 to the small-subunit processome. Recognizes the substrate consensus sequence [ST]-Q. Phosphorylates 'Ser-139' of histone variant H2AX, thereby regulating DNA damage response mechanism. Phosphorylates ASF1A, DCLRE1C, c-Abl/ABL1, histone H1, HSPCA, c-jun/JUN, p53/TP53, PARP1, POU2F1, DHX9, FH, SRF, NHEJ1/XLF, XRCC1, XRCC4, XRCC5, XRCC6, WRN, MYC and RFA2. Can phosphorylate C1D not only in the presence of linear DNA but also in the presence of supercoiled DNA. Ability to phosphorylate p53/TP53 in the presence of supercoiled DNA is dependent on C1D. Acts as a regulator of the phosphatidylinositol 3-kinase/protein kinase B signal transduction by mediating phosphorylation of 'Ser-473' of protein kinase B (PKB/AKT1, PKB/AKT2, PKB/AKT3), promoting their activation. Contributes to the determination of the circadian period length by antagonizing phosphorylation of CRY1 'Ser-588' and increasing CRY1 protein stability, most likely through an indirect mechanism. Plays a role in the regulation of DNA virus-mediated innate immune response by assembling into the HDP-RNP complex, a complex that serves as a platform for IRF3 phosphorylation and subsequent innate immune response activation through the cGAS-STING pathway. Also regulates the cGAS-STING pathway by catalyzing phosphorylation of CGAS, thereby impairing CGAS oligomerization and activation. Also regulates the cGAS-STING pathway by mediating phosphorylation of PARP1. The chain is DNA-dependent protein kinase catalytic subunit (PRKDC) from Canis lupus familiaris (Dog).